A 276-amino-acid chain; its full sequence is Hydroxyethylthiazole kinase (276 aa).

Positions 126 and 172 each coordinate ATP. Gly-199 contacts substrate.

This sequence belongs to the Thz kinase family. The cofactor is Mg(2+).

The catalysed reaction is 5-(2-hydroxyethyl)-4-methylthiazole + ATP = 4-methyl-5-(2-phosphooxyethyl)-thiazole + ADP + H(+). The protein operates within cofactor biosynthesis; thiamine diphosphate biosynthesis; 4-methyl-5-(2-phosphoethyl)-thiazole from 5-(2-hydroxyethyl)-4-methylthiazole: step 1/1. In terms of biological role, catalyzes the phosphorylation of the hydroxyl group of 4-methyl-5-beta-hydroxyethylthiazole (THZ). The sequence is that of Hydroxyethylthiazole kinase from Burkholderia pseudomallei (strain 1106a).